The chain runs to 163 residues: Cyclic pyranopterin monophosphate synthase (163 aa).

Substrate-binding positions include 76–78 (LCH) and 114–115 (ME). Asp-129 is a catalytic residue.

It belongs to the MoaC family. As to quaternary structure, homohexamer; trimer of dimers.

The catalysed reaction is (8S)-3',8-cyclo-7,8-dihydroguanosine 5'-triphosphate = cyclic pyranopterin phosphate + diphosphate. Its pathway is cofactor biosynthesis; molybdopterin biosynthesis. Catalyzes the conversion of (8S)-3',8-cyclo-7,8-dihydroguanosine 5'-triphosphate to cyclic pyranopterin monophosphate (cPMP). This chain is Cyclic pyranopterin monophosphate synthase, found in Desulfovibrio desulfuricans (strain ATCC 27774 / DSM 6949 / MB).